The sequence spans 129 residues: MSYKFPDNLNYADTHEYVLEENGLLKIGVSEFAIDQLGDIVFVELADEGATLEKGETFGTIESVKAVEEVYLPFSGEIVSVNESVIENPELLQNDPIGEGWLVILKPESKASIADLMTSEEYQSKVVPK.

The 83-residue stretch at 24-106 (LLKIGVSEFA…IGEGWLVILK (83 aa)) folds into the Lipoyl-binding domain. Position 65 is an N6-lipoyllysine (lysine 65).

Belongs to the GcvH family. In terms of assembly, the glycine cleavage system is composed of four proteins: P, T, L and H. The cofactor is (R)-lipoate.

The glycine cleavage system catalyzes the degradation of glycine. The H protein shuttles the methylamine group of glycine from the P protein to the T protein. The protein is Glycine cleavage system H protein of Prochlorococcus marinus (strain AS9601).